We begin with the raw amino-acid sequence, 390 residues long: S-adenosylmethionine synthase 4 (390 aa).

Glu9 contacts Mg(2+). His15 contacts ATP. K(+) is bound at residue Glu43. The L-methionine site is built by Glu56 and Gln99. ATP contacts are provided by residues 167–169, 235–238, Asp246, 252–253, Ala269, Lys273, and Lys277; these read DGK, SGRF, and RK. Asp246 is an L-methionine binding site. Residue Lys277 participates in L-methionine binding.

This sequence belongs to the AdoMet synthase family. Homotetramer. The cofactor is Mn(2+). Mg(2+) serves as cofactor. Requires Co(2+) as cofactor. It depends on K(+) as a cofactor.

Its subcellular location is the cytoplasm. The enzyme catalyses L-methionine + ATP + H2O = S-adenosyl-L-methionine + phosphate + diphosphate. It functions in the pathway amino-acid biosynthesis; S-adenosyl-L-methionine biosynthesis; S-adenosyl-L-methionine from L-methionine: step 1/1. Functionally, catalyzes the formation of S-adenosylmethionine from methionine and ATP. The reaction comprises two steps that are both catalyzed by the same enzyme: formation of S-adenosylmethionine (AdoMet) and triphosphate, and subsequent hydrolysis of the triphosphate. The polypeptide is S-adenosylmethionine synthase 4 (METK4) (Populus trichocarpa (Western balsam poplar)).